The sequence spans 494 residues: Glutamyl-tRNA reductase (494 aa).

Substrate contacts are provided by residues 58 to 61 (TCNR), S118, 123 to 125 (EQQ), and Q129. C59 acts as the Nucleophile in catalysis. 205 to 210 (GAGAMA) serves as a coordination point for NADP(+). Residues 448-494 (KGANAGSGQRKKQKPQENRVSTARAVYRSTYQDLTQASTPGGKDDDQ) are disordered. A compositionally biased stretch (polar residues) spans 476–486 (STYQDLTQAST).

Belongs to the glutamyl-tRNA reductase family. As to quaternary structure, homodimer.

It carries out the reaction (S)-4-amino-5-oxopentanoate + tRNA(Glu) + NADP(+) = L-glutamyl-tRNA(Glu) + NADPH + H(+). The protein operates within porphyrin-containing compound metabolism; protoporphyrin-IX biosynthesis; 5-aminolevulinate from L-glutamyl-tRNA(Glu): step 1/2. Functionally, catalyzes the NADPH-dependent reduction of glutamyl-tRNA(Glu) to glutamate 1-semialdehyde (GSA). The sequence is that of Glutamyl-tRNA reductase from Corynebacterium urealyticum (strain ATCC 43042 / DSM 7109).